Consider the following 224-residue polypeptide: uncharacterized protein (224 aa).

Positions 203–224 (ELKKKKKKKIKKPKEIRNQKNV) are disordered. Basic residues predominate over residues 204–214 (LKKKKKKKIKK). The span at 215–224 (PKEIRNQKNV) shows a compositional bias: basic and acidic residues.

This is an uncharacterized protein from Mycoplasma genitalium (strain ATCC 33530 / DSM 19775 / NCTC 10195 / G37) (Mycoplasmoides genitalium).